The primary structure comprises 337 residues: Large ribosomal subunit protein uL3 (337 aa).

Residues 1–29 (MARHHQPRKGSVAFSPRKRAARETPRVKS) are disordered.

Belongs to the universal ribosomal protein uL3 family. In terms of assembly, part of the 50S ribosomal subunit. Forms a cluster with proteins L14 and L24e.

In terms of biological role, one of the primary rRNA binding proteins, it binds directly near the 3'-end of the 23S rRNA, where it nucleates assembly of the 50S subunit. The polypeptide is Large ribosomal subunit protein uL3 (Methanothermobacter thermautotrophicus (strain ATCC 29096 / DSM 1053 / JCM 10044 / NBRC 100330 / Delta H) (Methanobacterium thermoautotrophicum)).